Reading from the N-terminus, the 195-residue chain is uncharacterized protein (195 aa).

A signal peptide spans 1 to 16; it reads MIRTIIVFMLLTISFG.

This is an uncharacterized protein from Acanthamoeba polyphaga mimivirus (APMV).